The chain runs to 251 residues: Adenosylcobinamide-GDP ribazoletransferase (251 aa).

The next 6 membrane-spanning stretches (helical) occupy residues 36–56 (LYPF…FVLS), 60–80 (VPIM…TGFL), 110–130 (VGAF…AGIF), 181–201 (EIIL…TLGI), 202–222 (NYLI…LKVK), and 231–251 (DVAG…LGII).

Belongs to the CobS family. Mg(2+) serves as cofactor.

It is found in the cell membrane. The enzyme catalyses alpha-ribazole + adenosylcob(III)inamide-GDP = adenosylcob(III)alamin + GMP + H(+). The catalysed reaction is alpha-ribazole 5'-phosphate + adenosylcob(III)inamide-GDP = adenosylcob(III)alamin 5'-phosphate + GMP + H(+). It participates in cofactor biosynthesis; adenosylcobalamin biosynthesis; adenosylcobalamin from cob(II)yrinate a,c-diamide: step 7/7. Its function is as follows. Joins adenosylcobinamide-GDP and alpha-ribazole to generate adenosylcobalamin (Ado-cobalamin). Also synthesizes adenosylcobalamin 5'-phosphate from adenosylcobinamide-GDP and alpha-ribazole 5'-phosphate. The sequence is that of Adenosylcobinamide-GDP ribazoletransferase from Clostridium perfringens (strain SM101 / Type A).